The primary structure comprises 236 residues: 2,3,4,5-tetrahydropyridine-2,6-dicarboxylate N-acetyltransferase (236 aa).

This sequence belongs to the transferase hexapeptide repeat family. DapH subfamily.

The enzyme catalyses (S)-2,3,4,5-tetrahydrodipicolinate + acetyl-CoA + H2O = L-2-acetamido-6-oxoheptanedioate + CoA. Its pathway is amino-acid biosynthesis; L-lysine biosynthesis via DAP pathway; LL-2,6-diaminopimelate from (S)-tetrahydrodipicolinate (acetylase route): step 1/3. In terms of biological role, catalyzes the transfer of an acetyl group from acetyl-CoA to tetrahydrodipicolinate. This chain is 2,3,4,5-tetrahydropyridine-2,6-dicarboxylate N-acetyltransferase, found in Clostridium botulinum (strain ATCC 19397 / Type A).